Here is a 374-residue protein sequence, read N- to C-terminus: RNA polymerase sigma factor SigA (374 aa).

The interval 141–211 is sigma-70 factor domain-2; sequence LAEANLRLVV…TRAIADQART (71 aa). The Interaction with polymerase core subunit RpoC signature appears at 165-168; it reads DLIQ. The sigma-70 factor domain-3 stretch occupies residues 220–296; that stretch reads ETINKLIRVQ…DQDATSPSDH (77 aa). Residues 309 to 362 are sigma-70 factor domain-4; that stretch reads VLDTLTDREENVLRLRFGLDDGRTRTLEEVGRVFGVTRERIRQIEAKALRKLRH. A DNA-binding region (H-T-H motif) is located at residues 335–354; the sequence is LEEVGRVFGVTRERIRQIEA.

Belongs to the sigma-70 factor family. RpoD/SigA subfamily. As to quaternary structure, interacts transiently with the RNA polymerase catalytic core.

It localises to the cytoplasm. Sigma factors are initiation factors that promote the attachment of RNA polymerase to specific initiation sites and are then released. This sigma factor is the primary sigma factor during exponential growth. The protein is RNA polymerase sigma factor SigA of Listeria innocua serovar 6a (strain ATCC BAA-680 / CLIP 11262).